The primary structure comprises 467 residues: tRNA-2-methylthio-N(6)-dimethylallyladenosine synthase (467 aa).

Residues 1-20 form a disordered region; it reads MSDDTTQIEPAMAQETSPRA. Residues 23–143 form the MTTase N-terminal domain; it reads RKVFVKTYGC…LPNALARVRG (121 aa). Cys32, Cys68, Cys106, Cys184, Cys188, and Cys191 together coordinate [4Fe-4S] cluster. The 233-residue stretch at 170–402 folds into the Radical SAM core domain; it reads RKRGVSAFLT…QALLSAQQYA (233 aa). One can recognise a TRAM domain in the interval 405–467; sequence DSMIGRKMDV…TNSLIAQKLA (63 aa).

This sequence belongs to the methylthiotransferase family. MiaB subfamily. Monomer. It depends on [4Fe-4S] cluster as a cofactor.

It is found in the cytoplasm. The enzyme catalyses N(6)-dimethylallyladenosine(37) in tRNA + (sulfur carrier)-SH + AH2 + 2 S-adenosyl-L-methionine = 2-methylsulfanyl-N(6)-dimethylallyladenosine(37) in tRNA + (sulfur carrier)-H + 5'-deoxyadenosine + L-methionine + A + S-adenosyl-L-homocysteine + 2 H(+). Functionally, catalyzes the methylthiolation of N6-(dimethylallyl)adenosine (i(6)A), leading to the formation of 2-methylthio-N6-(dimethylallyl)adenosine (ms(2)i(6)A) at position 37 in tRNAs that read codons beginning with uridine. In Brucella melitensis biotype 1 (strain ATCC 23456 / CCUG 17765 / NCTC 10094 / 16M), this protein is tRNA-2-methylthio-N(6)-dimethylallyladenosine synthase.